Reading from the N-terminus, the 923-residue chain is Isoleucine--tRNA ligase (923 aa).

Positions 57–67 match the 'HIGH' region motif; it reads PYANGDIHIGT. Residue glutamate 561 coordinates L-isoleucyl-5'-AMP. A 'KMSKS' region motif is present at residues 602–606; it reads AMHKS. Residue lysine 605 coordinates ATP. 4 residues coordinate Zn(2+): cysteine 895, cysteine 898, cysteine 915, and cysteine 918.

Belongs to the class-I aminoacyl-tRNA synthetase family. IleS type 1 subfamily. Monomer. The cofactor is Zn(2+).

The protein resides in the cytoplasm. The catalysed reaction is tRNA(Ile) + L-isoleucine + ATP = L-isoleucyl-tRNA(Ile) + AMP + diphosphate. Functionally, catalyzes the attachment of isoleucine to tRNA(Ile). As IleRS can inadvertently accommodate and process structurally similar amino acids such as valine, to avoid such errors it has two additional distinct tRNA(Ile)-dependent editing activities. One activity is designated as 'pretransfer' editing and involves the hydrolysis of activated Val-AMP. The other activity is designated 'posttransfer' editing and involves deacylation of mischarged Val-tRNA(Ile). The polypeptide is Isoleucine--tRNA ligase (Brachyspira hyodysenteriae (strain ATCC 49526 / WA1)).